An 887-amino-acid polypeptide reads, in one-letter code: Bifunctional uridylyltransferase/uridylyl-removing enzyme (887 aa).

The uridylyltransferase stretch occupies residues 1-337 (MINTSPLLNY…RLPNYERKIE (337 aa)). Residues 339–699 (VNDHFKIVDN…AHRKAAQDAV (361 aa)) are uridylyl-removing. The HD domain occupies 457-579 (VDAHTLLLLR…LGDMEHLDYL (123 aa)). ACT domains are found at residues 700 to 782 (QIFI…LMQR) and 809 to 887 (MVEI…ICQH).

This sequence belongs to the GlnD family. Requires Mg(2+) as cofactor.

It carries out the reaction [protein-PII]-L-tyrosine + UTP = [protein-PII]-uridylyl-L-tyrosine + diphosphate. It catalyses the reaction [protein-PII]-uridylyl-L-tyrosine + H2O = [protein-PII]-L-tyrosine + UMP + H(+). Uridylyltransferase (UTase) activity is inhibited by glutamine, while glutamine activates uridylyl-removing (UR) activity. Its function is as follows. Modifies, by uridylylation and deuridylylation, the PII regulatory proteins (GlnB and homologs), in response to the nitrogen status of the cell that GlnD senses through the glutamine level. Under low glutamine levels, catalyzes the conversion of the PII proteins and UTP to PII-UMP and PPi, while under higher glutamine levels, GlnD hydrolyzes PII-UMP to PII and UMP (deuridylylation). Thus, controls uridylylation state and activity of the PII proteins, and plays an important role in the regulation of nitrogen assimilation and metabolism. This Acinetobacter baumannii (strain ACICU) protein is Bifunctional uridylyltransferase/uridylyl-removing enzyme.